Here is a 75-residue protein sequence, read N- to C-terminus: Small ribosomal subunit protein eS17 (75 aa).

Belongs to the eukaryotic ribosomal protein eS17 family.

In Thermoplasma volcanium (strain ATCC 51530 / DSM 4299 / JCM 9571 / NBRC 15438 / GSS1), this protein is Small ribosomal subunit protein eS17.